Consider the following 374-residue polypeptide: Proteinase-activated receptor 3 (374 aa).

The signal sequence occupies residues Met-1–Ser-21. A propeptide spans Gly-22 to Lys-38 (removed for receptor activation). 2 N-linked (GlcNAc...) asparagine glycosylation sites follow: Asn-25 and Asn-82. Residues Thr-39–Thr-94 are Extracellular-facing. A helical transmembrane segment spans residues Lys-95–Phe-120. Residues Phe-121 to Thr-128 lie on the Cytoplasmic side of the membrane. The helical transmembrane segment at Thr-129–Phe-148 threads the bilayer. The Extracellular segment spans residues Lys-149–Arg-167. The cysteines at positions 166 and 245 are disulfide-linked. Residues Ala-168–Ile-189 traverse the membrane as a helical segment. The Cytoplasmic segment spans residues Asn-190–Lys-206. The chain crosses the membrane as a helical span at residues His-207–Ile-230. Residues Leu-231 to Leu-260 are Extracellular-facing. Residues Tyr-261–Tyr-280 form a helical membrane-spanning segment. Over Cys-281–Leu-297 the chain is Cytoplasmic. The helical transmembrane segment at Trp-298–Ile-322 threads the bilayer. Residues Ile-323 to Leu-336 lie on the Extracellular side of the membrane. Asn-331 carries an N-linked (GlcNAc...) asparagine glycan. The chain crosses the membrane as a helical span at residues Tyr-337–Met-361. Residues Ser-362–Lys-374 lie on the Cytoplasmic side of the membrane.

It belongs to the G-protein coupled receptor 1 family. As to quaternary structure, interacts with INSC/inscuteable and probably GPSM2. A proteolytic cleavage generates a new N-terminus that functions as a tethered ligand. In terms of tissue distribution, highest expression in the megakaryocytes of the bone marrow, lower in mature megakaryocytes, in platelets and in a variety of other tissues such as heart and gut.

It localises to the cell membrane. Functionally, receptor for activated thrombin coupled to G proteins that stimulate phosphoinositide hydrolysis. This chain is Proteinase-activated receptor 3 (F2RL2), found in Homo sapiens (Human).